The following is a 37-amino-acid chain: Cytochrome b6-f complex subunit 5 (37 aa).

Residues 5–25 form a helical membrane-spanning segment; sequence LLSGIVLGMIPVTLAGLFVTA.

The protein belongs to the PetG family. As to quaternary structure, the 4 large subunits of the cytochrome b6-f complex are cytochrome b6, subunit IV (17 kDa polypeptide, PetD), cytochrome f and the Rieske protein, while the 4 small subunits are PetG, PetL, PetM and PetN. The complex functions as a dimer.

The protein localises to the plastid. It is found in the chloroplast thylakoid membrane. Functionally, component of the cytochrome b6-f complex, which mediates electron transfer between photosystem II (PSII) and photosystem I (PSI), cyclic electron flow around PSI, and state transitions. PetG is required for either the stability or assembly of the cytochrome b6-f complex. This Staurastrum punctulatum (Green alga) protein is Cytochrome b6-f complex subunit 5.